We begin with the raw amino-acid sequence, 179 residues long: ATP-dependent protease subunit HslV (179 aa).

T5 is an active-site residue. C164 and T167 together coordinate Na(+).

The protein belongs to the peptidase T1B family. HslV subfamily. A double ring-shaped homohexamer of HslV is capped on each side by a ring-shaped HslU homohexamer. The assembly of the HslU/HslV complex is dependent on binding of ATP.

It localises to the cytoplasm. It catalyses the reaction ATP-dependent cleavage of peptide bonds with broad specificity.. Its activity is regulated as follows. Allosterically activated by HslU binding. Protease subunit of a proteasome-like degradation complex believed to be a general protein degrading machinery. The sequence is that of ATP-dependent protease subunit HslV from Carboxydothermus hydrogenoformans (strain ATCC BAA-161 / DSM 6008 / Z-2901).